The primary structure comprises 261 residues: Cobalt transport protein CbiM (261 aa).

The N-terminal stretch at 1 to 33 (MLRRVLASKRASLILMGMLSFYIIVSASAPAYA) is a signal peptide. The next 7 helical transmembrane spans lie at 41–61 (LPAG…LLGV), 76–96 (LLLA…LPSV), 108–128 (LGSV…VLLF), 140–160 (TLGA…YWIY), 172–192 (IAIF…TSVQ), 197–217 (FPAP…IFAI), and 220–240 (IPLA…LQSY).

The protein belongs to the CbiM family. Forms an energy-coupling factor (ECF) transporter complex composed of an ATP-binding protein (A component, CbiO), a transmembrane protein (T component, CbiQ) and 2 possible substrate-capture proteins (S components, CbiM and CbiN) of unknown stoichimetry.

The protein resides in the cell inner membrane. Its pathway is cofactor biosynthesis; adenosylcobalamin biosynthesis. In terms of biological role, part of the energy-coupling factor (ECF) transporter complex CbiMNOQ involved in cobalt import. In Nostoc sp. (strain PCC 7120 / SAG 25.82 / UTEX 2576), this protein is Cobalt transport protein CbiM.